Here is a 375-residue protein sequence, read N- to C-terminus: Superinfection exclusion protein (375 aa).

The first 15 residues, 1 to 15 (MIALLILSLACSVSA), serve as a signal peptide directing secretion.

It belongs to the serpin family. Orthopoxvirus OPG040 subfamily. As to quaternary structure, interacts with OPG185/A56 protein.

Its subcellular location is the virion membrane. It is found in the host cell membrane. In terms of biological role, negatively regulates superinfection and syncytium formation in infected host cells. Acts in concert with OPG185/A56 protein at the host cell membrane by interacting with and inhibiting the mature virion entry/fusion complex (EFC). This mechanism ensures that new virions released from the cell cannot enter already infected cells. The protein is Superinfection exclusion protein (OPG040) of Cynomys gunnisoni (Gunnison's prairie dog).